A 203-amino-acid polypeptide reads, in one-letter code: Large ribosomal subunit protein bL25 (203 aa).

The segment at 182–203 (EITEEPETEEKKEEGASSVSNS) is disordered.

The protein belongs to the bacterial ribosomal protein bL25 family. CTC subfamily. In terms of assembly, part of the 50S ribosomal subunit; part of the 5S rRNA/L5/L18/L25 subcomplex. Contacts the 5S rRNA. Binds to the 5S rRNA independently of L5 and L18.

This is one of the proteins that binds to the 5S RNA in the ribosome where it forms part of the central protuberance. The polypeptide is Large ribosomal subunit protein bL25 (Caldicellulosiruptor saccharolyticus (strain ATCC 43494 / DSM 8903 / Tp8T 6331)).